Here is a 441-residue protein sequence, read N- to C-terminus: Dolichyl-diphosphooligosaccharide--protein glycosyltransferase 48 kDa subunit (441 aa).

The first 28 residues, 1-28 (MKMVPRLAVRAWPLCGLLLAALGCVCAS), serve as a signal peptide directing secretion. Residues 29–412 (GPRTLVLLDN…YERFIPSAYP (384 aa)) are Lumenal-facing. A helical membrane pass occupies residues 413-432 (YYASAFSMMAGLFLFSVVFL). At 433-441 (HMKEKEKSD) the chain is on the cytoplasmic side.

It belongs to the DDOST 48 kDa subunit family. As to quaternary structure, component of the oligosaccharyltransferase (OST) complex. OST exists in two different complex forms which contain common core subunits RPN1, RPN2, OST48, OST4, DAD1 and TMEM258, either STT3A or STT3B as catalytic subunits, and form-specific accessory subunits. STT3A complex assembly occurs through the formation of 3 subcomplexes. Subcomplex 1 contains RPN1 and TMEM258, subcomplex 2 contains the STT3A-specific subunits STT3A, DC2/OSTC, and KCP2 as well as the core subunit OST4, and subcomplex 3 contains RPN2, DAD1, and OST48. The STT3A complex can form stable complexes with the Sec61 complex or with both the Sec61 and TRAP complexes. Interacts with SMIM22.

The protein resides in the endoplasmic reticulum membrane. It functions in the pathway protein modification; protein glycosylation. In terms of biological role, subunit of the oligosaccharyl transferase (OST) complex that catalyzes the initial transfer of a defined glycan (Glc(3)Man(9)GlcNAc(2) in eukaryotes) from the lipid carrier dolichol-pyrophosphate to an asparagine residue within an Asn-X-Ser/Thr consensus motif in nascent polypeptide chains, the first step in protein N-glycosylation. N-glycosylation occurs cotranslationally and the complex associates with the Sec61 complex at the channel-forming translocon complex that mediates protein translocation across the endoplasmic reticulum (ER). All subunits are required for a maximal enzyme activity. Required for the assembly of both SST3A- and SS3B-containing OST complexes. The protein is Dolichyl-diphosphooligosaccharide--protein glycosyltransferase 48 kDa subunit of Rattus norvegicus (Rat).